We begin with the raw amino-acid sequence, 1621 residues long: ABC transporter A family member 2 (1621 aa).

A run of 7 helical transmembrane segments spans residues 30–50 (ILFP…VMAF), 234–254 (SVFI…DLVI), 276–296 (ISWM…ISII), 309–329 (GVVI…AFIL), 338–358 (FCGL…IFVA), 365–385 (GAKL…IFAM), and 405–425 (NQVI…VWYL). One can recognise an ABC transporter 1 domain in the interval 484–717 (ISIRNLRKEY…FGCGYLLTCS (234 aa)). 520–527 (GPNGSGKS) serves as a coordination point for ATP. The next 7 helical transmembrane spans lie at 856–876 (FFLT…MYKA), 1033–1053 (IVYF…SFAG), 1083–1103 (VWDY…LAGI), 1111–1131 (FGLM…LSYL), 1142–1162 (ATGA…IISL), 1183–1203 (VDIV…LFLV), and 1227–1247 (GSPM…IMIL). The ABC transporter 2 domain occupies 1293-1528 (LQFRNLHKLF…FGAGYTFDVK (236 aa)). 1331–1338 (GLNGAGKT) contributes to the ATP binding site.

It belongs to the ABC transporter superfamily. ABCA family.

Its subcellular location is the membrane. The sequence is that of ABC transporter A family member 2 (abcA2) from Dictyostelium discoideum (Social amoeba).